The sequence spans 165 residues: MSGKLTHIDQTGAANMVDVGSKDETERQAVAEGAVRMKPETLALILEGNAAKGDVIGTARLAGIMAAKRTSDLIPLCHPLMLTKVAVEIEPDENLPGLRVRALARLKGRTGVEMEALTAASVTCLTIYDMAKAVDRHMEIGSIRVIEKSGGKSGDWAVSDPALMR.

Residues 76-78 (LCH) and 114-115 (ME) contribute to the substrate site. Residue D129 is part of the active site.

The protein belongs to the MoaC family. As to quaternary structure, homohexamer; trimer of dimers.

The enzyme catalyses (8S)-3',8-cyclo-7,8-dihydroguanosine 5'-triphosphate = cyclic pyranopterin phosphate + diphosphate. Its pathway is cofactor biosynthesis; molybdopterin biosynthesis. Functionally, catalyzes the conversion of (8S)-3',8-cyclo-7,8-dihydroguanosine 5'-triphosphate to cyclic pyranopterin monophosphate (cPMP). In Brucella abortus (strain 2308), this protein is Cyclic pyranopterin monophosphate synthase.